Consider the following 278-residue polypeptide: Extracellular metalloprotease GLRG_06511 (278 aa).

The signal sequence occupies residues 1–19 (MQFKSLLVSALAAASTALA). Asn51 carries N-linked (GlcNAc...) asparagine glycosylation. His190 is a binding site for Zn(2+). Residue Glu191 is part of the active site. Residue His194 participates in Zn(2+) binding. A disulfide bond links Cys227 and Cys254.

It belongs to the peptidase M43B family.

The protein resides in the secreted. Functionally, secreted metalloproteinase that allows assimilation of proteinaceous substrates. The protein is Extracellular metalloprotease GLRG_06511 of Colletotrichum graminicola (strain M1.001 / M2 / FGSC 10212) (Maize anthracnose fungus).